Consider the following 478-residue polypeptide: MSQLLTARQAEELHKAMIAYLLSANLPKSAAALREELADSVQLDDSTAKKYEGLLEKKWTSVVRLQKKIMDLESRNNALQSELDSATPTSLARRNQDPVSWLPHAPARHILQSHREPVTCVGFHPVFSSLASGSDDTTIKIWDWELGELERTIKGHTKAVLDVDYGGPRGGTLLASCSSDLTIKLWDPSDGYKNIRTLPGHDHSVSAVRFIPSGAAGSPLSGNLLVSASRDKTLRIWDVTTGYCVKTLRGHVDWVRDVVASPDGRFLFSAGNDQVARLWDVSSGETKSTFLGHEHAVECVAFAPPTSYPHLAALAGLKKAPPSSSSAEYVATGSRDKSIRIWDARGTLIKTLIGHDNWVRALAFHPGGKYLLSVSDDKTLRCWDLTQECKCVRTVKDAHGHFISCIRWAPNIIKDAGVVNGDDTSTAASANGGALGASAINGVVPTGKKEDPGGGPMMGIRCVIATGSVDLKVRVFAS.

The region spanning 9 to 41 (QAEELHKAMIAYLLSANLPKSAAALREELADSV) is the LisH domain. A coiled-coil region spans residues 60–87 (TSVVRLQKKIMDLESRNNALQSELDSAT). WD repeat units follow at residues 113–154 (SHRE…RTIK), 156–196 (HTKA…KNIR), 200–247 (GHDH…CVKT), 250–289 (GHVD…TKST), 292–352 (GHEH…IKTL), 354–393 (GHDN…KCVR), 398–439 (AHGH…GASA), and 440–477 (INGV…RVFA).

It belongs to the WD repeat LIS1/nudF family. As to quaternary structure, self-associates. Interacts with NDL1 and dynein.

It is found in the cytoplasm. The protein resides in the cytoskeleton. The protein localises to the spindle pole. Functionally, positively regulates the activity of the minus-end directed microtubule motor protein dynein. May enhance dynein-mediated microtubule sliding by targeting dynein to the microtubule plus end. Required for nuclear migration during vegetative growth as well as development. Required for retrograde early endosome (EE) transport from the hyphal tip. Required for localization of dynein to the mitotic spindle poles. Recruits additional proteins to the dynein complex at SPBs. The chain is Nuclear distribution protein PAC1 from Paracoccidioides brasiliensis (strain Pb03).